A 630-amino-acid polypeptide reads, in one-letter code: Pentatricopeptide repeat-containing protein At1g63130, mitochondrial (630 aa).

A mitochondrion-targeting transit peptide spans 1 to 22 (MRRLFAISSTGNRFVHRSLLGK). PPR repeat units follow at residues 80–114 (SIVE…GISH), 115–149 (NLYT…GYEP), 150–184 (DIVT…GYQP), 185–219 (DSFT…GCQP), 220–254 (DLVT…KIEP), 255–289 (GVVI…GIRP), 290–324 (NVVT…KINP), 325–359 (NVVT…SIDP), 360–394 (DIFT…DCFP), 395–429 (NVVT…GLVG), 430–464 (NTVT…GVLP), 465–499 (DIMT…KMEP), 500–534 (DIYT…GVKP), 535–569 (NVVT…GPLP), and 570–604 (DSGT…RFVG).

The protein belongs to the PPR family. P subfamily.

The protein resides in the mitochondrion. The protein is Pentatricopeptide repeat-containing protein At1g63130, mitochondrial of Arabidopsis thaliana (Mouse-ear cress).